The primary structure comprises 1286 residues: MKLLLLNILLLCCLADKLNEFSADIDYYDLGIMSRGKNAGSWYHSYTHQYDVFYYLAMQPWRHFVWTTCETTKGNKECYKYIINEDHNLNAQQLNNIKNLDKQDFCQKEYAYPIEKYEVDWDNVPVDEQQIESVDINGKTCFKYAAKRPLAYVYLNTKMTYATKTEAYDVCRMDFIGGRSITFRSFNNENKDFIDQYNTNTTSKCIIDVHKNNVNTHLAIILGITDSTVIKSLQEKLSVLSQLTTVDGVTIYYLKGDSYATDNIKLKDLKYETLVKYTAGQGQVDPLVNIAKNDLFKMISDKKIKRGTMVVLMDNALGSEFNAETEFDRKNISVHTVVLNRNKDSKITYSALKLVSLGPHYHEFTSNSEVSTTIDELFKGIRANLTERCDRDKCSGFCDAMNRCTCPMCCENDCFYTSCDVETGSCIPWPKAKPKAKKECPATCVGLYECKDLEGCVVTKYNASCEPKVKCMVPYCDDDNNLKEVCKQKANCEADQKPSSDGYCWSYTCDETTGFCKKYKHGNLCTGKTTNCQEYVCDSEQRCTVQEKVCVKTSPYIEMSCYVAKCNLNTGMCENRLSCDTYSSCGGDSTGSVCKCDASTGNQCKCNKVENGNYCDSSKHEICDYTGDKPKCIVSECTEDLVRDGCLIKRCNKTSKTTYWENVDCSNTKIEFAQDGKSETMCKPYYSATCLNGQCVVQAVGDVSNVGCGYCSMGTDNVITYHDDCDSRKSQCGNFNGKCQPNGDNSYSCVFEKDKTSSKSDNDICAECSSLTCPADTTYRTYTYDSKTGTCKATVKPTPSCSVCEKGKFVEKCKDQKLERKVTLEDGKEYQYNIPKDCVNEQCIPRTYVDCLANDDNFGEIYKFYLPCQAYVTATYHYSSLFNLTSYKLHLPQSEEFMKEADKEAYCTYEITTRECKTCSLTETKEKVEEIDLCAEETKNGGVPFKCKNNNCIIDPNFDCQPIECKIQEIVITEKDGIKTTTCKDTGKTTCDTNNKRIEDARKAFIEGKEGIEQVECASTVCQNDNSCPIIADVEKCNQNTEVDYGCKAMTGECDGTTYLCKFVQLTDDPSLDSEHFRTKSGVELNNACLKYKCVESKGSDGKITHKWEIDTERSNIDPKPRNPCETATCDQTTGETIYTKKTCTVSEEFPTITPNQGRCFYCQCSYLDGSSVLTMYGETDKEYYDLDACGNCRVWNQTDRTQQLNNHTECILAGEINNVGAIAAATTVAVVVVAVVVALIVVSIGLFKTYQLVSSAMKNAITTTNENAEYVGADNEATNAATYNG.

The first 15 residues, 1 to 15 (MKLLLLNILLLCCLA), serve as a signal peptide directing secretion. At 16–1227 (DKLNEFSADI…NNVGAIAAAT (1212 aa)) the chain is on the extracellular side. N-linked (GlcNAc...) asparagine glycans are attached at residues Asn200, Asn331, Asn384, Asn462, Asn652, Asn883, Asn1197, and Asn1207. The chain crosses the membrane as a helical span at residues 1228 to 1248 (TVAVVVVAVVVALIVVSIGLF). Residues 1249–1286 (KTYQLVSSAMKNAITTTNENAEYVGADNEATNAATYNG) lie on the Cytoplasmic side of the membrane.

In terms of assembly, heterodimer composed of a 170 kDa heavy subunit (hgl) and a 31/35 kDa light subunit (lgl); disulfide-linked. In terms of processing, N-glycosylated.

It is found in the cell membrane. Functionally, lectin which binds galactose and N-acetyl-D-galactosamine of host glycoproteins and thus mediates adhesion to host cells. Mediates adherence to host colonic mucins, an essential step for pathogenic tissue invasion. This Entamoeba histolytica (strain ATCC 30459 / HM-1:IMSS / ABRM) protein is Galactose/N-acetyl-D-galactosamine lectin heavy subunit 2.